The chain runs to 301 residues: GTP cyclohydrolase FolE2 (301 aa).

It belongs to the GTP cyclohydrolase IV family.

It catalyses the reaction GTP + H2O = 7,8-dihydroneopterin 3'-triphosphate + formate + H(+). The protein operates within cofactor biosynthesis; 7,8-dihydroneopterin triphosphate biosynthesis; 7,8-dihydroneopterin triphosphate from GTP: step 1/1. Its function is as follows. Converts GTP to 7,8-dihydroneopterin triphosphate. This chain is GTP cyclohydrolase FolE2, found in Pseudomonas syringae pv. tomato (strain ATCC BAA-871 / DC3000).